Consider the following 393-residue polypeptide: MDLRSSAETDPDLSENHPGSVPAELQSRKQEQEKLSGVVKSVHRKLRRKYIEVGDFDKIWREHCEDEQTLSEYAMAMKNLADNHWANKCEGEGRIEWCRSVCQEYFQDGGMRRVLEKDEKSARHATAGNANTDTNAPPQLSSISTSSTFQLGKIRLLDVGSCFNPFLKFDEFLTVGIDIVPAVESVYKCDFLNLQLQQPLQLASDALDAFLRQLRGPIDALPAELFHVVVFSLLLSYFPSPYQRWLCCKKAHELLTLNGLLLIITPDSSHQGRHALMMRSWRVAVESLGFKRYKYVKFSHMHLIAFRKVSPTTSSDLVSRNYPEMLYIPQDFNTFDEDGFADCYEPPRSDFEDDQMACSFAELPETPYDSDSGESQSSSAPFYELEDPILLQS.

The disordered stretch occupies residues Met-1 to Leu-35. S-adenosyl-L-methionine is bound at residue Arg-94. The tract at residues Asp-118–Ser-141 is disordered. A compositionally biased stretch (low complexity) spans Ala-125 to Ala-136. Residues Gly-160, Asp-178, Asp-190, Phe-191, and Ser-232 each contribute to the S-adenosyl-L-methionine site. Residues Glu-362–Ser-393 form a disordered region.

It belongs to the BMT2/SAMTOR family. Interacts with the GATOR1 complex; interaction is disrupted when samtor binds S-adenosyl-L-methionine. Interacts with the KICSTOR complex; interaction is disrupted when bmt2/samtor binds S-adenosyl-L-methionine.

Its function is as follows. S-adenosyl-L-methionine-binding protein that acts as an inhibitor of mTORC1 signaling via interaction with the GATOR1 and KICSTOR complexes. Acts as a sensor of S-adenosyl-L-methionine to signal methionine sufficiency to mTORC1: in presence of methionine, binds S-adenosyl-L-methionine, leading to disrupt interaction with the GATOR1 and KICSTOR complexes and promote mTORC1 signaling. Upon methionine starvation, S-adenosyl-L-methionine levels are reduced, thereby promoting the association with GATOR1 and KICSTOR, leading to inhibit mTORC1 signaling. Probably also acts as a S-adenosyl-L-methionine-dependent methyltransferase. This Danio rerio (Zebrafish) protein is S-adenosylmethionine sensor upstream of mTORC1.